We begin with the raw amino-acid sequence, 78 residues long: Large ribosomal subunit protein bL31 (78 aa).

Belongs to the bacterial ribosomal protein bL31 family. Type A subfamily. Part of the 50S ribosomal subunit.

Binds the 23S rRNA. This is Large ribosomal subunit protein bL31 (rpmE) from Rickettsia felis (strain ATCC VR-1525 / URRWXCal2) (Rickettsia azadi).